A 1411-amino-acid polypeptide reads, in one-letter code: Protein RhsB (1411 aa).

A run of 28 repeats spans residues 330 to 352 (GKQVRSFTYDDKYRGRMVAHRHT), 353 to 374 (GRPEIRYRYDSDGRVTEQLNPA), 375 to 417 (GLSY…EHAD), 418 to 438 (GSVTQSQFDAVGRLRAQTDAA), 439 to 460 (GRTTEYSPDVVTGLITRITTPD), 461 to 481 (GRASAFYYNHHNQLTSATGPD), 482 to 502 (GLELRREYDELGRLIQETAPD), 503 to 525 (GDITRYRYDNPHSDLPCATEDAT), 526 to 546 (GSRKTMTWSRYGQLLSFTDCS), 547 to 567 (GYVTRYDHDRFGQMTAVHREE), 568 to 588 (GLSQYRAYDSRGQLIAVKDTQ), 589 to 609 (GHETRYEYNIAGDLTAVIAPD), 610 to 629 (GSRNGTQYDAWGKAVRTTQG), 630 to 650 (GLTRSMEYDAAGRVIRLTSEN), 651 to 671 (GSHTTFRYDVLDRLIQETGFD), 672 to 691 (GRTQRYHHDLTGKLIRSEDE), 692 to 711 (GLVTHWHYDEADRLTHRTVK), 712 to 734 (GETAERWQYDERGWLTDISHISE), 735 to 758 (GHRVAVHYRYDEKGRLTGERQTVH), 808 to 828 (GDTPLVEYTRDRLHRETLRSF), 829 to 850 (GRYELTTAYTPAGQLQSQHLNS), 851 to 871 (LLSDRDYTWNDNGELIRISSP), 872 to 894 (RQTRSYSYSTTGRLTGVHTTAAN), 895 to 930 (LDIRIPYATDPAGNRLPDPELHPDSTLSMWPDNRIA), 931 to 959 (RDAHYLYRYDRHGRLTEKTDLIPEGVIRT), 960 to 984 (DDERTHRYHYDSQHRLVHYTRTQYE), 985 to 1019 (EPLVESRYLYDPLGRRVAKRVWRRERDLTGWMSLS), and 1162 to 1186 (GATAWCAEYDEWGNLLNEENPHQLQ). Positions 330–1186 (GKQVRSFTYD…LNEENPHQLQ (857 aa)) are 28 X approximate tandem repeats.

This sequence belongs to the RHS family.

Rhs elements have a nonessential function. They may play an important role in the natural ecology of the cell. This Escherichia coli (strain K12) protein is Protein RhsB (rhsB).